Here is a 462-residue protein sequence, read N- to C-terminus: Stabilizer of axonemal microtubules 1 (462 aa).

12 mn regions span residues 30-64 (KPCF…KVNI), 65-97 (PMEG…PIQD), 98-131 (EMDF…QCND), 132-165 (KMEC…PASC), 166-199 (RFDH…LCNI), 200-232 (PLES…PSEV), 233-266 (PFDS…GLDI), 267-299 (PFPS…PPEG), 300-332 (KMDL…KKSD), 333-366 (RFES…FSDE), 367-400 (PMEY…RVNI), and 401-434 (PLEG…IFDE).

Belongs to the FAM154 family. As to quaternary structure, associates with microtubules via the Mn regions.

The protein localises to the cytoplasm. Its subcellular location is the cytoskeleton. It localises to the microtubule organizing center. The protein resides in the centrosome. It is found in the centriole. The protein localises to the cilium basal body. Its subcellular location is the cilium axoneme. Its function is as follows. May play a role in the regulation of cilium length. Stabilizes microtubules at low temperature. This Rattus norvegicus (Rat) protein is Stabilizer of axonemal microtubules 1 (Saxo1).